Here is a 391-residue protein sequence, read N- to C-terminus: Na(+)/H(+) antiporter NhaA (391 aa).

The next 11 helical transmembrane spans lie at A14 to L34, L59 to V79, S95 to F115, A124 to L144, V154 to F174, S177 to L197, L213 to I233, F261 to L281, I290 to I310, I328 to L348, and L363 to V383.

It belongs to the NhaA Na(+)/H(+) (TC 2.A.33) antiporter family.

The protein localises to the cell inner membrane. The catalysed reaction is Na(+)(in) + 2 H(+)(out) = Na(+)(out) + 2 H(+)(in). Na(+)/H(+) antiporter that extrudes sodium in exchange for external protons. The polypeptide is Na(+)/H(+) antiporter NhaA (Shewanella putrefaciens (strain CN-32 / ATCC BAA-453)).